We begin with the raw amino-acid sequence, 381 residues long: 1-deoxy-D-xylulose 5-phosphate reductoisomerase (381 aa).

Residues T10, G11, S12, I13, G36, K37, N38, and N122 each contribute to the NADPH site. Residue K123 coordinates 1-deoxy-D-xylulose 5-phosphate. E124 provides a ligand contact to NADPH. D148 is a Mn(2+) binding site. S149, E150, S173, and H196 together coordinate 1-deoxy-D-xylulose 5-phosphate. Residue E150 participates in Mn(2+) binding. G202 contributes to the NADPH binding site. Positions 209, 214, 215, and 218 each coordinate 1-deoxy-D-xylulose 5-phosphate. E218 provides a ligand contact to Mn(2+).

Belongs to the DXR family. Requires Mg(2+) as cofactor. Mn(2+) is required as a cofactor.

The catalysed reaction is 2-C-methyl-D-erythritol 4-phosphate + NADP(+) = 1-deoxy-D-xylulose 5-phosphate + NADPH + H(+). The protein operates within isoprenoid biosynthesis; isopentenyl diphosphate biosynthesis via DXP pathway; isopentenyl diphosphate from 1-deoxy-D-xylulose 5-phosphate: step 1/6. In terms of biological role, catalyzes the NADPH-dependent rearrangement and reduction of 1-deoxy-D-xylulose-5-phosphate (DXP) to 2-C-methyl-D-erythritol 4-phosphate (MEP). The polypeptide is 1-deoxy-D-xylulose 5-phosphate reductoisomerase (Desulfitobacterium hafniense (strain DSM 10664 / DCB-2)).